Here is a 201-residue protein sequence, read N- to C-terminus: Cell division protein SepF (201 aa).

A compositionally biased stretch (basic and acidic residues) spans 27-38 (VQERTSVQRDSR). The disordered stretch occupies residues 27–99 (VQERTSVQRD…PRVQNKDSVR (73 aa)). Residues 43–54 (QEASQRSHMTNS) are compositionally biased toward polar residues. The span at 72 to 81 (NRQERQRVQR) shows a compositional bias: basic and acidic residues. Polar residues predominate over residues 83–92 (NAYQQATPRV).

This sequence belongs to the SepF family. In terms of assembly, homodimer. Interacts with FtsZ.

The protein localises to the cytoplasm. Its function is as follows. Cell division protein that is part of the divisome complex and is recruited early to the Z-ring. Probably stimulates Z-ring formation, perhaps through the cross-linking of FtsZ protofilaments. Its function overlaps with FtsA. The chain is Cell division protein SepF from Streptococcus agalactiae serotype V (strain ATCC BAA-611 / 2603 V/R).